Reading from the N-terminus, the 396-residue chain is Fumarate--(S)-2,3-diaminopropanoate ligase (396 aa).

The catalysed reaction is (S)-2,3-diaminopropanoate + fumarate + ATP = N(3)-fumaroyl-(S)-2,3-diaminopropanoate + AMP + diphosphate. It participates in antibiotic biosynthesis. Involved in dapdiamide antibiotics biosynthesis. Ligates fumarate and 2,3-diaminopropionate (DAP) to form N-beta-fumaroyl-DAP. Can also form N-succinoyl-DAP from succinate and DAP, with lower efficiency. This is Fumarate--(S)-2,3-diaminopropanoate ligase from Enterobacter agglomerans (Erwinia herbicola).